Consider the following 240-residue polypeptide: Predicted GPI-anchored protein 58 (240 aa).

The first 18 residues, 1 to 18 (MQFSTLVSLAAVIVSTNA), serve as a signal peptide directing secretion. A disordered region spans residues 41–216 (HTNCPASSPA…NSTGPSSVPT (176 aa)). Over residues 51-86 (TPAPAPSASAPAPPAPEQPEPSAPAPAPSAPAPEQP) the composition is skewed to pro residues. Residues 87–103 (EQPATPATPAAPATPAT) are compositionally biased toward low complexity. Pro residues-rich tracts occupy residues 104–137 (PAAP…PEQP) and 153–192 (APAP…PAPS). Residues 193 to 216 (APASVPEQPASSVSNSTGPSSVPT) show a composition bias toward low complexity. N-linked (GlcNAc...) asparagine glycosylation is present at N207. G219 is lipidated: GPI-anchor amidated glycine. Positions 220 to 240 (AAAKQYITGSVAVIAAALLAL) are cleaved as a propeptide — removed in mature form.

It is found in the cell membrane. The sequence is that of Predicted GPI-anchored protein 58 (PGA58) from Candida albicans (strain SC5314 / ATCC MYA-2876) (Yeast).